The primary structure comprises 399 residues: S-adenosylmethionine synthase (399 aa).

His17 contributes to the ATP binding site. Asp19 is a binding site for Mg(2+). Glu45 provides a ligand contact to K(+). L-methionine is bound by residues Glu58 and Gln101. A flexible loop region spans residues 101–111 (QSADIAMGVDQ). Residues 177–179 (DGK), 244–245 (RF), Asp253, 259–260 (RK), Ala276, and Lys280 each bind ATP. Residue Asp253 coordinates L-methionine. Lys284 contacts L-methionine.

This sequence belongs to the AdoMet synthase family. As to quaternary structure, homotetramer; dimer of dimers. Requires Mg(2+) as cofactor. K(+) is required as a cofactor.

It localises to the cytoplasm. The enzyme catalyses L-methionine + ATP + H2O = S-adenosyl-L-methionine + phosphate + diphosphate. Its pathway is amino-acid biosynthesis; S-adenosyl-L-methionine biosynthesis; S-adenosyl-L-methionine from L-methionine: step 1/1. Catalyzes the formation of S-adenosylmethionine (AdoMet) from methionine and ATP. The overall synthetic reaction is composed of two sequential steps, AdoMet formation and the subsequent tripolyphosphate hydrolysis which occurs prior to release of AdoMet from the enzyme. The sequence is that of S-adenosylmethionine synthase from Bacillus cereus (strain ATCC 10987 / NRS 248).